Here is a 370-residue protein sequence, read N- to C-terminus: Thiamine-repressible mitochondrial transport protein THI74 (370 aa).

The Cytoplasmic segment spans residues 1-10 (MNRVGIDVDH). The helical transmembrane segment at 11–31 (MIGVLLLAVVVVFWVGASCLT) threads the bilayer. Residues 32 to 42 (NELLETNAYNK) are Mitochondrial intermembrane-facing. A helical membrane pass occupies residues 43-63 (PFFLTYLNISSFALYLTPDLW). Residues 64–119 (RIIQSRRKSLQERTERTLPIHTQESFSEFLPLLSSTPSTSSNLSSIADTKVKDTMR) are Cytoplasmic-facing. A helical membrane pass occupies residues 120–140 (LSLLFCVLWFVANLAANAALS). The 62-residue stretch at 129–190 (FVANLAANAA…SLFGIILIVM (62 aa)) folds into the EamA domain. The Mitochondrial intermembrane segment spans residues 141–146 (YTTVAS). A helical membrane pass occupies residues 147–167 (STILSSTSSFFTLFLATSLGI). At 168–169 (ET) the chain is on the cytoplasmic side. The chain crosses the membrane as a helical span at residues 170 to 190 (FSTKKLLGLFVSLFGIILIVM). Residues 191 to 203 (QSSKQQDSVSASS) lie on the Mitochondrial intermembrane side of the membrane. The helical transmembrane segment at 204–224 (FLVGNTLALLGSLGYSVYTTL) threads the bilayer. Topologically, residues 225–239 (LKYEISSKGLRLDIQ) are cytoplasmic. Residues 240 to 260 (MFLGYVGIFTFLLFWPILIIL) traverse the membrane as a helical segment. At 261–273 (DITHMETFELPSN) the chain is on the mitochondrial intermembrane side. Residues 274–294 (FHISFLVMLNCIIIFVSDYFW) form a helical membrane-spanning segment. Residues 295 to 303 (CKALILTSP) lie on the Cytoplasmic side of the membrane. A helical membrane pass occupies residues 304–324 (LVVTVALTFTIPLAMFADFVW). The Mitochondrial intermembrane segment spans residues 325–326 (RE). Residues 327-347 (AFFTPWYIIGVIFIFVSFFLV) form a helical membrane-spanning segment. Residues 348 to 370 (NHRGESAVEKDCAAVEKGPILDA) lie on the Cytoplasmic side of the membrane.

It is found in the mitochondrion membrane. In terms of biological role, may be involved in thiaminediphosphate transport across the mitochondrial membrane. The protein is Thiamine-repressible mitochondrial transport protein THI74 (THI74) of Saccharomyces cerevisiae (strain ATCC 204508 / S288c) (Baker's yeast).